The following is a 380-amino-acid chain: Chaperone protein DnaJ 2 (380 aa).

Residues 10–75 enclose the J domain; that stretch reads DYYKILGVSK…KKRKEYDQAR (66 aa). The span at 32 to 56 shows a compositional bias: basic and acidic residues; sequence KIARDNHPDSHPGDKAAEARFKEAS. A disordered region spans residues 32–63; the sequence is KIARDNHPDSHPGDKAAEARFKEASEANDVLS. Residues 151–230 form a CR-type zinc finger; sequence GTTVTMDMVS…CHGSGRAKST (80 aa). Positions 164, 167, 181, 184, 204, 207, 218, and 221 each coordinate Zn(2+). CXXCXGXG motif repeat units lie at residues 164 to 171, 181 to 188, 204 to 211, and 218 to 225; these read CQACRGTG, CSTCQGSG, CPDCHGRG, and CQVCHGSG.

The protein belongs to the DnaJ family. In terms of assembly, homodimer. The cofactor is Zn(2+).

The protein localises to the cytoplasm. In terms of biological role, participates actively in the response to hyperosmotic and heat shock by preventing the aggregation of stress-denatured proteins and by disaggregating proteins, also in an autonomous, DnaK-independent fashion. Unfolded proteins bind initially to DnaJ; upon interaction with the DnaJ-bound protein, DnaK hydrolyzes its bound ATP, resulting in the formation of a stable complex. GrpE releases ADP from DnaK; ATP binding to DnaK triggers the release of the substrate protein, thus completing the reaction cycle. Several rounds of ATP-dependent interactions between DnaJ, DnaK and GrpE are required for fully efficient folding. Also involved, together with DnaK and GrpE, in the DNA replication of plasmids through activation of initiation proteins. The protein is Chaperone protein DnaJ 2 of Cutibacterium acnes (strain DSM 16379 / KPA171202) (Propionibacterium acnes).